The sequence spans 360 residues: Mannose-1-phosphate guanylyltransferase catalytic subunit beta (360 aa).

Positions 2 to 222 (KALILVGGYG…QGFWMDIGQP (221 aa)) are substrate-binding domain. Asp110 is a binding site for GDP-alpha-D-mannose. Asp110 is a binding site for Mg(2+). The active site involves Lys162. Asp218 contributes to the GDP-alpha-D-mannose binding site. A Mg(2+)-binding site is contributed by Asp218. The tract at residues 245–360 (RAGPGFLGNV…DSVPEPRIIM (116 aa)) is hexapeptide repeat domain.

It belongs to the transferase hexapeptide repeat family. In terms of assembly, component of the GMPPA-GMPPB mannose-1-phosphate guanylyltransferase complex composed of 4 gmppa subunits and 8 gmppb subunits; the complex is organized into three layers, a central layer made up of 2 gmppa dimers sandwiched between two layers each made up of 2 gmppb dimers. Catalytic activity of gmppb is reduced when part of the complex and binding of GDP-alpha-D-Mannose by gmppa induces allosteric feedback inhibition of gmppb. Mg(2+) is required as a cofactor.

It catalyses the reaction alpha-D-mannose 1-phosphate + GTP + H(+) = GDP-alpha-D-mannose + diphosphate. The protein operates within nucleotide-sugar biosynthesis; GDP-alpha-D-mannose biosynthesis; GDP-alpha-D-mannose from alpha-D-mannose 1-phosphate (GTP route): step 1/1. Enzyme activity is reduced by incorporation into the GMPPA-GMPPB mannose-1-phosphate guanylyltransferase complex. Allosterically inhibited, when part of the GMPPA-GMPPB complex, by GDP-alpha-D-mannose binding to GMPPA. Its function is as follows. Catalytic subunit of the GMPPA-GMPPB mannose-1-phosphate guanylyltransferase complex. Catalyzes the formation of GDP-mannose, an essential precursor of glycan moieties of glycoproteins and glycolipids. Can catalyze the reverse reaction in vitro. Together with GMPPA regulates GDP-alpha-D-mannose levels. The sequence is that of Mannose-1-phosphate guanylyltransferase catalytic subunit beta (gmppb) from Danio rerio (Zebrafish).